The chain runs to 711 residues: Hepatocyte growth factor-like protein (711 aa).

The signal sequence occupies residues 1–18 (MGWLPLLLLLTQCLGVPG). One can recognise a PAN domain in the interval 21-105 (SPLNDFQVLR…GRCDLFQKKD (85 aa)). 20 cysteine pairs are disulfide-bonded: Cys-56–Cys-78, Cys-60–Cys-66, Cys-110–Cys-186, Cys-131–Cys-169, Cys-157–Cys-181, Cys-191–Cys-268, Cys-194–Cys-324, Cys-212–Cys-251, Cys-240–Cys-263, Cys-283–Cys-361, Cys-304–Cys-343, Cys-332–Cys-355, Cys-370–Cys-448, Cys-391–Cys-431, Cys-419–Cys-443, Cys-468–Cys-588, Cys-507–Cys-523, Cys-602–Cys-667, Cys-632–Cys-646, and Cys-657–Cys-685. A glycan (N-linked (GlcNAc...) asparagine) is linked at Asn-72. 4 consecutive Kringle domains span residues 110–186 (CIMN…IKSC), 191–268 (CVWC…LPRC), 283–361 (CFRG…IRRC), and 370–448 (CYHG…LRRC). N-linked (GlcNAc...) asparagine glycosylation is present at Asn-296. The 226-residue stretch at 484 to 709 (VVGGHPGNSP…FVDWIHKVMR (226 aa)) folds into the Peptidase S1 domain. A glycan (N-linked (GlcNAc...) asparagine) is linked at Asn-615.

This sequence belongs to the peptidase S1 family. Plasminogen subfamily. In terms of assembly, dimer of an alpha chain and a beta chain linked by a disulfide bond. Interacts (via beta chain) with MST1R (via SEMA domain). Cleaved after Arg-483, probably by HPN/Hepsin, to yield the active form consisting of two disulfide-linked chains.

The protein localises to the secreted. The polypeptide is Hepatocyte growth factor-like protein (MST1) (Homo sapiens (Human)).